Reading from the N-terminus, the 331-residue chain is Geranylgeranyl pyrophosphate synthase dpmaD (331 aa).

Residues Lys53, Arg56, and His85 each contribute to the isopentenyl diphosphate site. Residues Asp92 and Asp96 each coordinate Mg(2+). Position 101 (Arg101) interacts with dimethylallyl diphosphate. Position 102 (Arg102) interacts with isopentenyl diphosphate. Dimethylallyl diphosphate is bound by residues Lys179, Thr180, and Gln213. Residue Asp216 coordinates Mg(2+). Positions 220, 230, and 240 each coordinate dimethylallyl diphosphate.

It belongs to the FPP/GGPP synthase family. Mg(2+) serves as cofactor.

It carries out the reaction isopentenyl diphosphate + dimethylallyl diphosphate = (2E)-geranyl diphosphate + diphosphate. It catalyses the reaction isopentenyl diphosphate + (2E)-geranyl diphosphate = (2E,6E)-farnesyl diphosphate + diphosphate. The enzyme catalyses isopentenyl diphosphate + (2E,6E)-farnesyl diphosphate = (2E,6E,10E)-geranylgeranyl diphosphate + diphosphate. The protein operates within secondary metabolite biosynthesis; terpenoid biosynthesis. Functionally, geranylgeranyl pyrophosphate synthase; part of the gene cluster that mediates the biosynthesis of the diterpenoid pyrones subglutinols A and B. The first step of the pathway is the synthesis of the alpha-pyrone moiety by the polyketide synthase dpmaA via condensation of one acetyl-CoA starter unit with 3 malonyl-CoA units and 2 methylations. The alpha-pyrone is then combined with geranylgeranyl pyrophosphate (GGPP) formed by the GGPP synthase dpmaD through the action of the prenyltransferase dpmaC to yield a linear alpha-pyrone diterpenoid. Subsequent steps in the diterpenoid pyrone biosynthetic pathway involve the decalin core formation, which is initiated by the epoxidation of the C10-C11 olefin by the FAD-dependent oxidoreductase dpmaE, and is followed by a cyclization cascade catalyzed by the terpene cyclase dpmaB. The dehydrogenase dpmaF is then involved in tetrahydrofuran (THF) ring formation at the C5 unit to complete the formation of subglutinols A and B. This Metarhizium anisopliae (Entomophthora anisopliae) protein is Geranylgeranyl pyrophosphate synthase dpmaD.